The following is a 255-amino-acid chain: Pyrroloquinoline-quinone synthase (255 aa).

It belongs to the PqqC family.

It carries out the reaction 6-(2-amino-2-carboxyethyl)-7,8-dioxo-1,2,3,4,7,8-hexahydroquinoline-2,4-dicarboxylate + 3 O2 = pyrroloquinoline quinone + 2 H2O2 + 2 H2O + H(+). Its pathway is cofactor biosynthesis; pyrroloquinoline quinone biosynthesis. Functionally, ring cyclization and eight-electron oxidation of 3a-(2-amino-2-carboxyethyl)-4,5-dioxo-4,5,6,7,8,9-hexahydroquinoline-7,9-dicarboxylic-acid to PQQ. This chain is Pyrroloquinoline-quinone synthase, found in Cereibacter sphaeroides (strain KD131 / KCTC 12085) (Rhodobacter sphaeroides).